The sequence spans 20 residues: Major extrapallial fluid protein (20 aa).

The disordered stretch occupies residues 1 to 20 (NPVDDHHDDHHDAPIVEHHD).

Homodimer. In terms of processing, glycosylated.

Functionally, appears to be a building block of the soluble organic matrix of the shell. The protein binds calcium. This Mytilus edulis (Blue mussel) protein is Major extrapallial fluid protein.